Here is a 61-residue protein sequence, read N- to C-terminus: Small ribosomal subunit protein uS14B (61 aa).

Cys24, Cys27, Cys40, and Cys43 together coordinate Zn(2+).

The protein belongs to the universal ribosomal protein uS14 family. Zinc-binding uS14 subfamily. As to quaternary structure, part of the 30S ribosomal subunit. Contacts proteins S3 and S10. Zn(2+) is required as a cofactor.

Functionally, binds 16S rRNA, required for the assembly of 30S particles and may also be responsible for determining the conformation of the 16S rRNA at the A site. In Mycobacterium ulcerans (strain Agy99), this protein is Small ribosomal subunit protein uS14B.